Consider the following 357-residue polypeptide: Dual-specificity RNA methyltransferase RlmN (357 aa).

The active-site Proton acceptor is Glu-89. A Radical SAM core domain is found at 109–340 (EGEKYTVCVS…CTIRESKALD (232 aa)). An intrachain disulfide couples Cys-116 to Cys-345. [4Fe-4S] cluster is bound by residues Cys-123, Cys-127, and Cys-130. S-adenosyl-L-methionine-binding positions include 173–174 (GE), Ser-203, 226–228 (SLH), and Asn-302. Cys-345 acts as the S-methylcysteine intermediate in catalysis.

It belongs to the radical SAM superfamily. RlmN family. [4Fe-4S] cluster is required as a cofactor.

Its subcellular location is the cytoplasm. The catalysed reaction is adenosine(2503) in 23S rRNA + 2 reduced [2Fe-2S]-[ferredoxin] + 2 S-adenosyl-L-methionine = 2-methyladenosine(2503) in 23S rRNA + 5'-deoxyadenosine + L-methionine + 2 oxidized [2Fe-2S]-[ferredoxin] + S-adenosyl-L-homocysteine. It carries out the reaction adenosine(37) in tRNA + 2 reduced [2Fe-2S]-[ferredoxin] + 2 S-adenosyl-L-methionine = 2-methyladenosine(37) in tRNA + 5'-deoxyadenosine + L-methionine + 2 oxidized [2Fe-2S]-[ferredoxin] + S-adenosyl-L-homocysteine. Its function is as follows. Specifically methylates position 2 of adenine 2503 in 23S rRNA and position 2 of adenine 37 in tRNAs. m2A2503 modification seems to play a crucial role in the proofreading step occurring at the peptidyl transferase center and thus would serve to optimize ribosomal fidelity. This Helicobacter pylori (strain J99 / ATCC 700824) (Campylobacter pylori J99) protein is Dual-specificity RNA methyltransferase RlmN.